A 150-amino-acid chain; its full sequence is D-aminoacyl-tRNA deacylase (150 aa).

Residues 138–139 (GP) carry the Gly-cisPro motif, important for rejection of L-amino acids motif.

It belongs to the DTD family. In terms of assembly, homodimer.

Its subcellular location is the cytoplasm. The enzyme catalyses glycyl-tRNA(Ala) + H2O = tRNA(Ala) + glycine + H(+). The catalysed reaction is a D-aminoacyl-tRNA + H2O = a tRNA + a D-alpha-amino acid + H(+). Its function is as follows. An aminoacyl-tRNA editing enzyme that deacylates mischarged D-aminoacyl-tRNAs. Also deacylates mischarged glycyl-tRNA(Ala), protecting cells against glycine mischarging by AlaRS. Acts via tRNA-based rather than protein-based catalysis; rejects L-amino acids rather than detecting D-amino acids in the active site. By recycling D-aminoacyl-tRNA to D-amino acids and free tRNA molecules, this enzyme counteracts the toxicity associated with the formation of D-aminoacyl-tRNA entities in vivo and helps enforce protein L-homochirality. This Bacteroides fragilis (strain ATCC 25285 / DSM 2151 / CCUG 4856 / JCM 11019 / LMG 10263 / NCTC 9343 / Onslow / VPI 2553 / EN-2) protein is D-aminoacyl-tRNA deacylase.